We begin with the raw amino-acid sequence, 446 residues long: Glutamine synthetase (446 aa).

Residues 15 to 102 (RDIRFVRLWF…MFCDITMPDG (88 aa)) enclose the GS beta-grasp domain. The region spanning 109–446 (PRHVLRRQLT…PYELRTYLSL (338 aa)) is the GS catalytic domain. Mg(2+) contacts are provided by Glu132 and Glu134. Glu184 lines the ATP pocket. Residues Glu189 and Glu196 each coordinate Mg(2+). Residue Gly241 participates in L-glutamate binding. A Mg(2+)-binding site is contributed by His245. Residues 247–249 (HMS) and Ser249 contribute to the ATP site. Positions 298, 304, and 316 each coordinate L-glutamate. Arg316 and Arg321 together coordinate ATP. Glu336 lines the Mg(2+) pocket. Arg338 provides a ligand contact to L-glutamate.

It belongs to the glutamine synthetase family. As to quaternary structure, oligomer of 12 subunits arranged in the form of two hexagons. In its feedback-inhibited form, interacts with TnrA in order to block its DNA-binding activity. Requires Mg(2+) as cofactor.

The protein resides in the cytoplasm. The enzyme catalyses L-glutamate + NH4(+) + ATP = L-glutamine + ADP + phosphate + H(+). Inhibited by glutamine. In terms of biological role, glutamine synthetase (GS) is an unusual multitasking protein that functions as an enzyme, a transcription coregulator, and a chaperone in ammonium assimilation and in the regulation of genes involved in nitrogen metabolism. It catalyzes the ATP-dependent biosynthesis of glutamine from glutamate and ammonia. Feedback-inhibited GlnA also interacts with and regulates the activity of the transcriptional regulator TnrA. During nitrogen limitation, TnrA is in its DNA-binding active state and turns on the transcription of genes required for nitrogen assimilation. Under conditions of nitrogen excess, feedback-inhibited GlnA forms a stable complex with TnrA, which inhibits its DNA-binding activity. In contrast, feedback-inhibited GlnA acts as a chaperone to stabilize the DNA-binding activity of GlnR, which represses the transcription of nitrogen assimilation genes. This chain is Glutamine synthetase, found in Mycobacterium bovis (strain ATCC BAA-935 / AF2122/97).